Reading from the N-terminus, the 1341-residue chain is DNA-directed RNA polymerase subunit beta (1341 aa).

The protein belongs to the RNA polymerase beta chain family. As to quaternary structure, the RNAP catalytic core consists of 2 alpha, 1 beta, 1 beta' and 1 omega subunit. When a sigma factor is associated with the core the holoenzyme is formed, which can initiate transcription.

The catalysed reaction is RNA(n) + a ribonucleoside 5'-triphosphate = RNA(n+1) + diphosphate. In terms of biological role, DNA-dependent RNA polymerase catalyzes the transcription of DNA into RNA using the four ribonucleoside triphosphates as substrates. The polypeptide is DNA-directed RNA polymerase subunit beta (Vibrio cholerae serotype O1 (strain ATCC 39315 / El Tor Inaba N16961)).